A 53-amino-acid chain; its full sequence is Unknown protein from 2D-PAGE of needles (53 aa).

This Pinus pinaster (Maritime pine) protein is Unknown protein from 2D-PAGE of needles.